A 281-amino-acid polypeptide reads, in one-letter code: Ribosomal protein L11 methyltransferase (281 aa).

Residues Thr131, Gly152, Asp174, and Asn217 each contribute to the S-adenosyl-L-methionine site.

The protein belongs to the methyltransferase superfamily. PrmA family.

The protein resides in the cytoplasm. The catalysed reaction is L-lysyl-[protein] + 3 S-adenosyl-L-methionine = N(6),N(6),N(6)-trimethyl-L-lysyl-[protein] + 3 S-adenosyl-L-homocysteine + 3 H(+). Methylates ribosomal protein L11. The chain is Ribosomal protein L11 methyltransferase from Phocaeicola vulgatus (strain ATCC 8482 / DSM 1447 / JCM 5826 / CCUG 4940 / NBRC 14291 / NCTC 11154) (Bacteroides vulgatus).